Here is a 362-residue protein sequence, read N- to C-terminus: Exopolygalacturonase (362 aa).

PbH1 repeat units follow at residues 138 to 164 (CKNL…HIGR), 165 to 186 (SDGV…SLGD), 188 to 208 (SKNI…SVGS), and 218 to 239 (VVGI…RIKT). N-linked (GlcNAc...) asparagine glycosylation is present at Asn-140. The active-site Proton donor is Asp-179. N-linked (GlcNAc...) asparagine glycans are attached at residues Asn-192 and Asn-195. His-202 is an active-site residue. A glycan (N-linked (GlcNAc...) asparagine) is linked at Asn-225.

The protein belongs to the glycosyl hydrolase 28 family. As to expression, pollen tubes growing through the style during pollination.

Its subcellular location is the secreted. The protein localises to the cell wall. The enzyme catalyses [(1-&gt;4)-alpha-D-galacturonosyl](n) + H2O = alpha-D-galacturonate + [(1-&gt;4)-alpha-D-galacturonosyl](n-1). Its function is as follows. May function in depolymerizing pectin during pollen development, germination, and tube growth. Acts as an exo-polygalacturonase. This Oenothera organensis (Evening primrose) protein is Exopolygalacturonase.